Consider the following 315-residue polypeptide: Transaldolase (315 aa).

Catalysis depends on lysine 125, which acts as the Schiff-base intermediate with substrate.

This sequence belongs to the transaldolase family. Type 1 subfamily. In terms of assembly, homodimer.

Its subcellular location is the cytoplasm. It catalyses the reaction D-sedoheptulose 7-phosphate + D-glyceraldehyde 3-phosphate = D-erythrose 4-phosphate + beta-D-fructose 6-phosphate. It functions in the pathway carbohydrate degradation; pentose phosphate pathway; D-glyceraldehyde 3-phosphate and beta-D-fructose 6-phosphate from D-ribose 5-phosphate and D-xylulose 5-phosphate (non-oxidative stage): step 2/3. Transaldolase is important for the balance of metabolites in the pentose-phosphate pathway. The chain is Transaldolase from Polaromonas naphthalenivorans (strain CJ2).